The following is a 926-amino-acid chain: DNA mismatch repair protein MutS (926 aa).

The disordered stretch occupies residues Val-16–Ser-40. The span at Pro-26–Ser-40 shows a compositional bias: low complexity. Residue Gly-658–Ser-665 participates in ATP binding.

This sequence belongs to the DNA mismatch repair MutS family.

This protein is involved in the repair of mismatches in DNA. It is possible that it carries out the mismatch recognition step. This protein has a weak ATPase activity. In Granulibacter bethesdensis (strain ATCC BAA-1260 / CGDNIH1), this protein is DNA mismatch repair protein MutS.